The following is an 831-amino-acid chain: Valine--tRNA ligase (831 aa).

The 'HIGH' region motif lies at 77–87; it reads PFTSGELHMGH. Positions 564–568 match the 'KMSKS' region motif; it reads RMSKS. K567 lines the ATP pocket.

It belongs to the class-I aminoacyl-tRNA synthetase family. ValS type 2 subfamily.

The protein resides in the cytoplasm. The enzyme catalyses tRNA(Val) + L-valine + ATP = L-valyl-tRNA(Val) + AMP + diphosphate. Catalyzes the attachment of valine to tRNA(Val). As ValRS can inadvertently accommodate and process structurally similar amino acids such as threonine, to avoid such errors, it has a 'posttransfer' editing activity that hydrolyzes mischarged Thr-tRNA(Val) in a tRNA-dependent manner. This chain is Valine--tRNA ligase, found in Sulfolobus acidocaldarius (strain ATCC 33909 / DSM 639 / JCM 8929 / NBRC 15157 / NCIMB 11770).